The chain runs to 71 residues: Metallothionein-like protein 1 (71 aa).

This sequence belongs to the metallothionein superfamily. Type 15 family.

Metallothioneins have a high content of cysteine residues that bind various heavy metals. This chain is Metallothionein-like protein 1 (MT1), found in Casuarina glauca (Swamp oak).